Consider the following 212-residue polypeptide: Pyridoxine/pyridoxamine 5'-phosphate oxidase (212 aa).

Substrate-binding positions include Arg8–Tyr11 and Lys66. FMN contacts are provided by residues Arg61–Lys66, Phe76–Thr77, Arg82, Lys83, and Gln105. Residues Tyr123, Arg127, and Ser131 each contribute to the substrate site. Residues Gln140 to Ser141 and Trp185 each bind FMN. Arg191–His193 serves as a coordination point for substrate. Arg195 is an FMN binding site.

The protein belongs to the pyridoxamine 5'-phosphate oxidase family. In terms of assembly, homodimer. FMN is required as a cofactor.

It catalyses the reaction pyridoxamine 5'-phosphate + O2 + H2O = pyridoxal 5'-phosphate + H2O2 + NH4(+). It carries out the reaction pyridoxine 5'-phosphate + O2 = pyridoxal 5'-phosphate + H2O2. The protein operates within cofactor metabolism; pyridoxal 5'-phosphate salvage; pyridoxal 5'-phosphate from pyridoxamine 5'-phosphate: step 1/1. It functions in the pathway cofactor metabolism; pyridoxal 5'-phosphate salvage; pyridoxal 5'-phosphate from pyridoxine 5'-phosphate: step 1/1. Its function is as follows. Catalyzes the oxidation of either pyridoxine 5'-phosphate (PNP) or pyridoxamine 5'-phosphate (PMP) into pyridoxal 5'-phosphate (PLP). In Shewanella frigidimarina (strain NCIMB 400), this protein is Pyridoxine/pyridoxamine 5'-phosphate oxidase.